A 478-amino-acid polypeptide reads, in one-letter code: Abscisate beta-glucosyltransferase (478 aa).

The active-site Proton acceptor is the His-20. His-20 lines the an anthocyanidin pocket. Asp-108 serves as the catalytic Charge relay. Ala-340, Gln-342, His-357, Trp-360, Asn-361, Ser-362, and Glu-365 together coordinate UDP-alpha-D-glucose. Ala-380 provides a ligand contact to an anthocyanidin. Positions 381 and 382 each coordinate UDP-alpha-D-glucose.

This sequence belongs to the UDP-glycosyltransferase family.

It catalyses the reaction 2-cis-(+)-abscisate + UDP-alpha-D-glucose = beta-D-glucopyranosyl cis-(+)-abscisate + UDP. Its function is as follows. Glucosyltransferase involved in the catabolism of abscisic acid (ABA). Adds a glucosyl group at the C-1 position of ABA; (S)-2-trans-abscisate is a better substrate than the natural (+)-S-abscisate or its enantiomer (-)-R-abscisate. No activity with (-)-phaseic acid (PA), methylated-ABA or with other hormones such as jasmonate, zeatin, auxin (IAA) or gibberellin A3 (GA3). The sequence is that of Abscisate beta-glucosyltransferase (AOG) from Phaseolus angularis (Azuki bean).